Consider the following 373-residue polypeptide: tRNA 2-selenouridine synthase (373 aa).

The region spanning 12-136 (FINDRPMMDA…MRGFLLETTE (125 aa)) is the Rhodanese domain. Residue C95 is the S-selanylcysteine intermediate of the active site.

It belongs to the SelU family. Monomer.

The enzyme catalyses 5-methylaminomethyl-2-thiouridine(34) in tRNA + selenophosphate + (2E)-geranyl diphosphate + H2O + H(+) = 5-methylaminomethyl-2-selenouridine(34) in tRNA + (2E)-thiogeraniol + phosphate + diphosphate. It catalyses the reaction 5-methylaminomethyl-2-thiouridine(34) in tRNA + (2E)-geranyl diphosphate = 5-methylaminomethyl-S-(2E)-geranyl-thiouridine(34) in tRNA + diphosphate. It carries out the reaction 5-methylaminomethyl-S-(2E)-geranyl-thiouridine(34) in tRNA + selenophosphate + H(+) = 5-methylaminomethyl-2-(Se-phospho)selenouridine(34) in tRNA + (2E)-thiogeraniol. The catalysed reaction is 5-methylaminomethyl-2-(Se-phospho)selenouridine(34) in tRNA + H2O = 5-methylaminomethyl-2-selenouridine(34) in tRNA + phosphate. Functionally, involved in the post-transcriptional modification of the uridine at the wobble position (U34) of tRNA(Lys), tRNA(Glu) and tRNA(Gln). Catalyzes the conversion of 2-thiouridine (S2U-RNA) to 2-selenouridine (Se2U-RNA). Acts in a two-step process involving geranylation of 2-thiouridine (S2U) to S-geranyl-2-thiouridine (geS2U) and subsequent selenation of the latter derivative to 2-selenouridine (Se2U) in the tRNA chain. This chain is tRNA 2-selenouridine synthase, found in Ectopseudomonas mendocina (strain ymp) (Pseudomonas mendocina).